The chain runs to 377 residues: Succinyl-diaminopimelate desuccinylase (377 aa).

His-68 contributes to the Zn(2+) binding site. Asp-70 is an active-site residue. Asp-101 provides a ligand contact to Zn(2+). Glu-135 (proton acceptor) is an active-site residue. Zn(2+) contacts are provided by Glu-136, Glu-164, and His-350.

The protein belongs to the peptidase M20A family. DapE subfamily. As to quaternary structure, homodimer. Zn(2+) is required as a cofactor. Co(2+) serves as cofactor.

It carries out the reaction N-succinyl-(2S,6S)-2,6-diaminopimelate + H2O = (2S,6S)-2,6-diaminopimelate + succinate. It participates in amino-acid biosynthesis; L-lysine biosynthesis via DAP pathway; LL-2,6-diaminopimelate from (S)-tetrahydrodipicolinate (succinylase route): step 3/3. Its function is as follows. Catalyzes the hydrolysis of N-succinyl-L,L-diaminopimelic acid (SDAP), forming succinate and LL-2,6-diaminopimelate (DAP), an intermediate involved in the bacterial biosynthesis of lysine and meso-diaminopimelic acid, an essential component of bacterial cell walls. This Aliivibrio fischeri (strain ATCC 700601 / ES114) (Vibrio fischeri) protein is Succinyl-diaminopimelate desuccinylase.